The sequence spans 287 residues: Probable endonuclease 4 (287 aa).

Zn(2+)-binding residues include histidine 69, histidine 109, glutamate 144, aspartate 178, histidine 181, histidine 215, aspartate 228, histidine 230, and glutamate 260.

Belongs to the AP endonuclease 2 family. Zn(2+) serves as cofactor.

It catalyses the reaction Endonucleolytic cleavage to 5'-phosphooligonucleotide end-products.. Functionally, endonuclease IV plays a role in DNA repair. It cleaves phosphodiester bonds at apurinic or apyrimidinic (AP) sites, generating a 3'-hydroxyl group and a 5'-terminal sugar phosphate. In Thermotoga sp. (strain RQ2), this protein is Probable endonuclease 4.